The sequence spans 270 residues: MHTVFYVSDGTAITAEVFGHAVLSQFPLVFEQVTIPFVETLEKARQVRARIDEQFRQTGLRPILFHTIVDPLVREEVLKAQASGHDFLNTFVSPLEQELGVKAEPRLHRTHGMENRKLYDDRIEAVNFALANDDGITTKEYEEADIILIGVSRCGKTPTSLYLALQFGIRAANYPFIEQDMGALVLPTALKANRHKLFGLTITPQRLHEIRNQRRANSRYSSLEQCEQELASVERLFRQEAIRFLDTSSHSVEEISAKILEATGMRRQLY.

150 to 157 is a binding site for ADP; it reads GVSRCGKT.

This sequence belongs to the pyruvate, phosphate/water dikinase regulatory protein family. PSRP subfamily.

It carries out the reaction [pyruvate, water dikinase] + ADP = [pyruvate, water dikinase]-phosphate + AMP + H(+). The catalysed reaction is [pyruvate, water dikinase]-phosphate + phosphate + H(+) = [pyruvate, water dikinase] + diphosphate. Its function is as follows. Bifunctional serine/threonine kinase and phosphorylase involved in the regulation of the phosphoenolpyruvate synthase (PEPS) by catalyzing its phosphorylation/dephosphorylation. This is Putative phosphoenolpyruvate synthase regulatory protein from Aeromonas salmonicida (strain A449).